The following is a 117-amino-acid chain: Alpha-endosulfine (117 aa).

The segment at 1-53 (MAAPLGTGARAEDSGQEKQDSQEKETVIPERAEEAKLKAKYPNLGQKPGGSDF) is disordered. A compositionally biased stretch (basic and acidic residues) spans 10-37 (RAEDSGQEKQDSQEKETVIPERAEEAKL). At Ser-67 the chain carries Phosphoserine; by GWL. Residues 76-117 (KMKNKQLPTAGPDKNLVTGDHIPKPQDLPQRKSSLVASKLAG) are disordered.

This sequence belongs to the endosulfine family. Phosphorylation at Ser-67 by GWL during mitosis is essential for interaction with PPP2R2D (PR55-delta) and subsequent inactivation of PP2A.

Its subcellular location is the cytoplasm. Functionally, protein phosphatase inhibitor that specifically inhibits protein phosphatase 2A (PP2A) during mitosis. When phosphorylated at Ser-67 during mitosis, specifically interacts with PPP2R2D (PR55-delta) and inhibits its activity, leading to inactivation of PP2A, an essential condition to keep cyclin-B1-CDK1 activity high during M phase. The chain is Alpha-endosulfine (ENSA) from Gallus gallus (Chicken).